The following is a 301-amino-acid chain: General transcription and DNA repair factor IIH subunit TFB4 (301 aa).

The C4-type zinc-finger motif lies at 259 to 276 (CSVCLSIFCEHHKKCSTC).

This sequence belongs to the TFB4 family. Component of the 7-subunit TFIIH core complex composed of XPB, XPD, TFB1/GTF2H1, GTF2H2/P44, TFB4/GTF2H3, TFB2/GTF2H4 and TFB5/GTF2H5, which is active in NER. The core complex associates with the 3-subunit CDK-activating kinase (CAK) module composed of CYCH1/cyclin H1, CDKD and MAT1/At4g30820 to form the 10-subunit holoenzyme (holo-TFIIH) active in transcription.

The protein localises to the nucleus. Component of the general transcription and DNA repair factor IIH (TFIIH) core complex, which is involved in general and transcription-coupled nucleotide excision repair (NER) of damaged DNA and, when complexed to CAK, in RNA transcription by RNA polymerase II. In NER, TFIIH acts by opening DNA around the lesion to allow the excision of the damaged oligonucleotide and its replacement by a new DNA fragment. In transcription, TFIIH has an essential role in transcription initiation. When the pre-initiation complex (PIC) has been established, TFIIH is required for promoter opening and promoter escape. Phosphorylation of the C-terminal tail (CTD) of the largest subunit of RNA polymerase II by the kinase module CAK controls the initiation of transcription. This Arabidopsis thaliana (Mouse-ear cress) protein is General transcription and DNA repair factor IIH subunit TFB4.